The primary structure comprises 249 residues: Phosphatidylserine decarboxylase proenzyme (249 aa).

The active-site Schiff-base intermediate with substrate; via pyruvic acid is the serine 208. Serine 208 carries the post-translational modification Pyruvic acid (Ser); by autocatalysis.

It belongs to the phosphatidylserine decarboxylase family. PSD-A subfamily. As to quaternary structure, heterodimer of a large membrane-associated beta subunit and a small pyruvoyl-containing alpha subunit. Requires pyruvate as cofactor. In terms of processing, is synthesized initially as an inactive proenzyme. Formation of the active enzyme involves a self-maturation process in which the active site pyruvoyl group is generated from an internal serine residue via an autocatalytic post-translational modification. Two non-identical subunits are generated from the proenzyme in this reaction, and the pyruvate is formed at the N-terminus of the alpha chain, which is derived from the carboxyl end of the proenzyme. The post-translation cleavage follows an unusual pathway, termed non-hydrolytic serinolysis, in which the side chain hydroxyl group of the serine supplies its oxygen atom to form the C-terminus of the beta chain, while the remainder of the serine residue undergoes an oxidative deamination to produce ammonia and the pyruvoyl prosthetic group on the alpha chain.

It is found in the cell membrane. It carries out the reaction a 1,2-diacyl-sn-glycero-3-phospho-L-serine + H(+) = a 1,2-diacyl-sn-glycero-3-phosphoethanolamine + CO2. It functions in the pathway phospholipid metabolism; phosphatidylethanolamine biosynthesis; phosphatidylethanolamine from CDP-diacylglycerol: step 2/2. In terms of biological role, catalyzes the formation of phosphatidylethanolamine (PtdEtn) from phosphatidylserine (PtdSer). This chain is Phosphatidylserine decarboxylase proenzyme, found in Erythrobacter litoralis (strain HTCC2594).